Consider the following 166-residue polypeptide: Interferon gamma (166 aa).

A signal peptide spans 1–23 (MNYTSFILAFQLCAILGSSTYYC). A Pyrrolidone carboxylic acid modification is found at Q24. N39 and N106 each carry an N-linked (GlcNAc...) asparagine glycan. A disordered region spans residues 147 to 166 (ANLRKRKRSQNPFRGRRALQ). Over residues 148–166 (NLRKRKRSQNPFRGRRALQ) the composition is skewed to basic residues.

This sequence belongs to the type II (or gamma) interferon family. In terms of assembly, homodimer. Interacts with IFNGR1 (via extracellular domain); this interaction promotes IFNGR1 dimerization. In terms of tissue distribution, released primarily from activated T lymphocytes.

It is found in the secreted. Its function is as follows. Type II interferon produced by immune cells such as T-cells and NK cells that plays crucial roles in antimicrobial, antiviral, and antitumor responses by activating effector immune cells and enhancing antigen presentation. Primarily signals through the JAK-STAT pathway after interaction with its receptor IFNGR1 to affect gene regulation. Upon IFNG binding, IFNGR1 intracellular domain opens out to allow association of downstream signaling components JAK2, JAK1 and STAT1, leading to STAT1 activation, nuclear translocation and transcription of IFNG-regulated genes. Many of the induced genes are transcription factors such as IRF1 that are able to further drive regulation of a next wave of transcription. Plays a role in class I antigen presentation pathway by inducing a replacement of catalytic proteasome subunits with immunoproteasome subunits. In turn, increases the quantity, quality, and repertoire of peptides for class I MHC loading. Increases the efficiency of peptide generation also by inducing the expression of activator PA28 that associates with the proteasome and alters its proteolytic cleavage preference. Up-regulates as well MHC II complexes on the cell surface by promoting expression of several key molecules such as cathepsins B/CTSB, H/CTSH, and L/CTSL. Participates in the regulation of hematopoietic stem cells during development and under homeostatic conditions by affecting their development, quiescence, and differentiation. The polypeptide is Interferon gamma (IFNG) (Equus caballus (Horse)).